A 158-amino-acid polypeptide reads, in one-letter code: Tryptophan-rich protein TspO (158 aa).

The next 5 helical transmembrane spans lie at Ile-5–Phe-25, Leu-48–Leu-68, Val-79–Phe-99, Leu-105–Phe-125, and Leu-134–Leu-154.

The protein belongs to the TspO/BZRP family.

It is found in the membrane. The protein localises to the cell membrane. Binds tetrapyrroles and promotes the photooxidative degradation of protoporphyrin IX. Can bind the benzodiazepine receptor agonist PK-11195 (in vitro); this interferes with photooxidative tetrapyrrole degradation. May play a role in the transmembrane transport of tetrapyrroles and similar compounds. The protein is Tryptophan-rich protein TspO of Chlorobaculum tepidum (strain ATCC 49652 / DSM 12025 / NBRC 103806 / TLS) (Chlorobium tepidum).